An 83-amino-acid polypeptide reads, in one-letter code: Apolipoprotein C-I, basic form (83 aa).

The signal sequence occupies residues 1–26; it reads MRLFLSLPVLVVVLSMVLEGPAPAQG.

Belongs to the apolipoprotein C1 family.

The protein resides in the secreted. Inhibitor of lipoprotein binding to the low density lipoprotein (LDL) receptor, LDL receptor-related protein, and very low density lipoprotein (VLDL) receptor. Associates with high density lipoproteins (HDL) and the triacylglycerol-rich lipoproteins in the plasma and makes up about 10% of the protein of the VLDL and 2% of that of HDL. Appears to interfere directly with fatty acid uptake and is also the major plasma inhibitor of cholesteryl ester transfer protein (CETP). Binds free fatty acids and reduces their intracellular esterification. Modulates the interaction of APOE with beta-migrating VLDL and inhibits binding of beta-VLDL to the LDL receptor-related protein. The sequence is that of Apolipoprotein C-I, basic form (APOC1B) from Colobus guereza (Mantled guereza).